The chain runs to 318 residues: NADH-ubiquinone oxidoreductase chain 1 (318 aa).

The next 8 membrane-spanning stretches (helical) occupy residues 3–23 (FMNLLTTIIPILLAVAFLTLL), 69–89 (VLFIIAPTLALTLALMMWIPL), 102–122 (ILFMLALSSLAVYGIMWSGWA), 146–166 (LAIIILSILLMNGSFALSTLI), 171–191 (HIWLILPSWPLAMMWFISTLA), 222–242 (LFFLAEYANIIMMNALTIILF), 253–273 (ELYTTNFMIKALVLTTLFLWV), and 294–314 (LPLTLVMCMWHVTLPIILAGI).

The protein belongs to the complex I subunit 1 family. In terms of assembly, core subunit of respiratory chain NADH dehydrogenase (Complex I) which is composed of 45 different subunits.

It is found in the mitochondrion inner membrane. It carries out the reaction a ubiquinone + NADH + 5 H(+)(in) = a ubiquinol + NAD(+) + 4 H(+)(out). In terms of biological role, core subunit of the mitochondrial membrane respiratory chain NADH dehydrogenase (Complex I) which catalyzes electron transfer from NADH through the respiratory chain, using ubiquinone as an electron acceptor. Essential for the catalytic activity and assembly of complex I. This Cnephaeus nilssonii (Northern bat) protein is NADH-ubiquinone oxidoreductase chain 1 (MT-ND1).